We begin with the raw amino-acid sequence, 365 residues long: BTB/POZ and TAZ domain-containing protein 1 (365 aa).

Residues 25–96 form the BTB domain; it reads TDVEIITSGR…LYSPSVTENE (72 aa). Residues 193–202 carry the Nuclear localization signal motif; sequence RKKRRRRHRR. The TAZ-type zinc-finger motif lies at 205 to 304; it reads NLYLQLSEAM…SESCRVPLCR (100 aa). The caM-binding stretch occupies residues 315–338; that stretch reads KMVEDTKWKVLVRRVASAKAMSSL.

As to quaternary structure, interacts with CUL3A. Interacts with GTE9/BET9 and GTE11/BET10 through the BTB domain. Preferentially expressed in young leaves, roots and stems.

The protein localises to the nucleus. It localises to the cytoplasm. It functions in the pathway protein modification; protein ubiquitination. Functionally, may act as a substrate-specific adapter of an E3 ubiquitin-protein ligase complex (CUL3-RBX1-BTB) which mediates the ubiquitination and subsequent proteasomal degradation of target proteins. Also targeted for degradation by the 26S proteasome pathway. May be involved in gametophyte development. The polypeptide is BTB/POZ and TAZ domain-containing protein 1 (BT1) (Arabidopsis thaliana (Mouse-ear cress)).